The primary structure comprises 317 residues: Ornithine carbamoyltransferase (317 aa).

Carbamoyl phosphate-binding positions include 57 to 60 (STRT), Q84, R108, and 135 to 138 (HPCQ). L-ornithine is bound by residues N166, D230, and 234-235 (SM). Residues 270-271 (CL) and R298 contribute to the carbamoyl phosphate site.

The protein belongs to the aspartate/ornithine carbamoyltransferase superfamily. OTCase family. In terms of assembly, homododecamer.

It localises to the cytoplasm. It catalyses the reaction carbamoyl phosphate + L-ornithine = L-citrulline + phosphate + H(+). The protein operates within amino-acid biosynthesis; L-arginine biosynthesis; L-arginine from L-ornithine and carbamoyl phosphate: step 1/3. Reversibly catalyzes the transfer of the carbamoyl group from carbamoyl phosphate (CP) to the N(epsilon) atom of ornithine (ORN) to produce L-citrulline. This is Ornithine carbamoyltransferase from Pyrococcus horikoshii (strain ATCC 700860 / DSM 12428 / JCM 9974 / NBRC 100139 / OT-3).